The chain runs to 330 residues: Biotin synthase (330 aa).

Residues 53–276 (NNIRLNVLLS…VFPFKELRLS (224 aa)) enclose the Radical SAM core domain. Positions 68, 72, and 75 each coordinate [4Fe-4S] cluster. C112, C144, C204, and R274 together coordinate [2Fe-2S] cluster.

It belongs to the radical SAM superfamily. Biotin synthase family. As to quaternary structure, homodimer. [4Fe-4S] cluster is required as a cofactor. [2Fe-2S] cluster serves as cofactor.

The catalysed reaction is (4R,5S)-dethiobiotin + (sulfur carrier)-SH + 2 reduced [2Fe-2S]-[ferredoxin] + 2 S-adenosyl-L-methionine = (sulfur carrier)-H + biotin + 2 5'-deoxyadenosine + 2 L-methionine + 2 oxidized [2Fe-2S]-[ferredoxin]. It functions in the pathway cofactor biosynthesis; biotin biosynthesis; biotin from 7,8-diaminononanoate: step 2/2. In terms of biological role, catalyzes the conversion of dethiobiotin (DTB) to biotin by the insertion of a sulfur atom into dethiobiotin via a radical-based mechanism. This chain is Biotin synthase, found in Streptococcus agalactiae serotype III (strain NEM316).